The chain runs to 221 residues: MPGTSELITVAVPKGRLLQESSALFERALGVSPRKLLEGTRKLAADAPEAGLRFISIRAGDVASYVEHGAAEVGIVGLDVLREEPRDLYEPLDLGIGRCTVIVARPKGARPLPRGVAPRVATKYLSLAARHFAAKGVPAEIIPLHGSIEVAPSLGLADTIVDITETGETLRANGLVIEEKVLEVSARLVVNRVALKLHPERLRLLIEALRAAVAAADAEAR.

It belongs to the ATP phosphoribosyltransferase family. Short subfamily. In terms of assembly, heteromultimer composed of HisG and HisZ subunits.

It localises to the cytoplasm. It catalyses the reaction 1-(5-phospho-beta-D-ribosyl)-ATP + diphosphate = 5-phospho-alpha-D-ribose 1-diphosphate + ATP. The protein operates within amino-acid biosynthesis; L-histidine biosynthesis; L-histidine from 5-phospho-alpha-D-ribose 1-diphosphate: step 1/9. Its function is as follows. Catalyzes the condensation of ATP and 5-phosphoribose 1-diphosphate to form N'-(5'-phosphoribosyl)-ATP (PR-ATP). Has a crucial role in the pathway because the rate of histidine biosynthesis seems to be controlled primarily by regulation of HisG enzymatic activity. The protein is ATP phosphoribosyltransferase of Anaeromyxobacter dehalogenans (strain 2CP-C).